Here is a 287-residue protein sequence, read N- to C-terminus: Large ribosomal subunit protein uL2 (287 aa).

Positions 221 to 287 (RGSVMNPCDH…SKRSRGGRDS (67 aa)) are disordered. Positions 258–287 (KTRKRNKPSNKFVLRKRRKTSKRSRGGRDS) are enriched in basic residues.

The protein belongs to the universal ribosomal protein uL2 family. Part of the 50S ribosomal subunit. Forms a bridge to the 30S subunit in the 70S ribosome.

Functionally, one of the primary rRNA binding proteins. Required for association of the 30S and 50S subunits to form the 70S ribosome, for tRNA binding and peptide bond formation. It has been suggested to have peptidyltransferase activity; this is somewhat controversial. Makes several contacts with the 16S rRNA in the 70S ribosome. The sequence is that of Large ribosomal subunit protein uL2 from Synechococcus sp. (strain CC9311).